The sequence spans 339 residues: Ribosomal RNA small subunit methyltransferase C (339 aa).

This sequence belongs to the methyltransferase superfamily. RsmC family. In terms of assembly, monomer.

Its subcellular location is the cytoplasm. It catalyses the reaction guanosine(1207) in 16S rRNA + S-adenosyl-L-methionine = N(2)-methylguanosine(1207) in 16S rRNA + S-adenosyl-L-homocysteine + H(+). Specifically methylates the guanine in position 1207 of 16S rRNA in the 30S particle. The sequence is that of Ribosomal RNA small subunit methyltransferase C from Aliivibrio fischeri (strain MJ11) (Vibrio fischeri).